A 148-amino-acid polypeptide reads, in one-letter code: HTH-type transcriptional regulator SarZ (148 aa).

Residues 9 to 139 enclose the HTH marR-type domain; that stretch reads SKQLCFLFYV…IINNLRNFVS (131 aa). The segment at residues 55–78 is a DNA-binding region (H-T-H motif); that stretch reads IKKLGERVFLDSGTLTPLLKKLEK.

This sequence belongs to the SarZ family.

It localises to the cytoplasm. Activates transcription of virulence factors alpha- and beta hemolysin genes (hla and hlb). Also, activates RNAIII expression, a central regulator transcribed from the agr locus. The polypeptide is HTH-type transcriptional regulator SarZ (sarZ) (Staphylococcus aureus (strain USA300)).